Here is a 171-residue protein sequence, read N- to C-terminus: Adenine phosphoribosyltransferase (171 aa).

Belongs to the purine/pyrimidine phosphoribosyltransferase family. Homodimer.

Its subcellular location is the cytoplasm. It carries out the reaction AMP + diphosphate = 5-phospho-alpha-D-ribose 1-diphosphate + adenine. The protein operates within purine metabolism; AMP biosynthesis via salvage pathway; AMP from adenine: step 1/1. In terms of biological role, catalyzes a salvage reaction resulting in the formation of AMP, that is energically less costly than de novo synthesis. The protein is Adenine phosphoribosyltransferase of Gloeobacter violaceus (strain ATCC 29082 / PCC 7421).